A 79-amino-acid chain; its full sequence is Sulfur carrier protein TusA (79 aa).

The active-site Cysteine persulfide intermediate is C17.

Belongs to the sulfur carrier protein TusA family.

The protein resides in the cytoplasm. In terms of biological role, sulfur carrier protein which probably makes part of a sulfur-relay system. This is Sulfur carrier protein TusA from Pseudoalteromonas translucida (strain TAC 125).